The sequence spans 270 residues: 3-phenylpropionate-dihydrodiol/cinnamic acid-dihydrodiol dehydrogenase (270 aa).

10–34 (FITGGGSGLGLALVERFIEEGAQVA) is a binding site for NAD(+). Residue S143 coordinates substrate. Catalysis depends on Y156, which acts as the Proton acceptor.

Belongs to the short-chain dehydrogenases/reductases (SDR) family.

It catalyses the reaction 3-(cis-5,6-dihydroxycyclohexa-1,3-dien-1-yl)propanoate + NAD(+) = 3-(2,3-dihydroxyphenyl)propanoate + NADH + H(+). It carries out the reaction (2E)-3-(cis-5,6-dihydroxycyclohexa-1,3-dien-1-yl)prop-2-enoate + NAD(+) = (2E)-3-(2,3-dihydroxyphenyl)prop-2-enoate + NADH + H(+). It functions in the pathway aromatic compound metabolism; 3-phenylpropanoate degradation. In terms of biological role, converts 3-phenylpropionate-dihydrodiol (PP-dihydrodiol) and cinnamic acid-dihydrodiol (CI-dihydrodiol) into 3-(2,3-dihydroxylphenyl)propanoic acid (DHPP) and 2,3-dihydroxicinnamic acid (DHCI), respectively. The chain is 3-phenylpropionate-dihydrodiol/cinnamic acid-dihydrodiol dehydrogenase from Escherichia coli O157:H7.